A 425-amino-acid chain; its full sequence is Inositol hexakisphosphate kinase 2 (425 aa).

Residues 206-208 and aspartate 219 contribute to the ATP site; that span reads ENL. Residues 215 to 223, lysine 221, and 235 to 242 each bind substrate; these read PCVLDLKMG and KAANQIRK. An ATP-binding site is contributed by aspartate 382. Histidine 385 is a binding site for substrate.

This sequence belongs to the inositol phosphokinase (IPK) family. Detected in kidney, intestine, liver and heart.

The protein resides in the nucleus. The catalysed reaction is 1D-myo-inositol hexakisphosphate + ATP = 5-diphospho-1D-myo-inositol 1,2,3,4,6-pentakisphosphate + ADP. Its pathway is phospholipid metabolism; phosphatidylinositol metabolism. Its function is as follows. Converts inositol hexakisphosphate (InsP6) to diphosphoinositol pentakisphosphate (InsP7/PP-InsP5). The polypeptide is Inositol hexakisphosphate kinase 2 (IP6K2) (Oryctolagus cuniculus (Rabbit)).